Reading from the N-terminus, the 715-residue chain is Fatty acid oxidation complex subunit alpha (715 aa).

Positions 1 to 190 (MIYQGKAITV…KVGAVDAVVA (190 aa)) are enoyl-CoA hydratase/isomerase. Asp297 contacts substrate. Positions 312 to 715 (KDVKLAAVLG…MAKNGQKFFG (404 aa)) are 3-hydroxyacyl-CoA dehydrogenase. NAD(+) contacts are provided by residues Met325, Asp344, 401–403 (VVE), Lys408, and Ser430. His451 (for 3-hydroxyacyl-CoA dehydrogenase activity) is an active-site residue. Asn454 serves as a coordination point for NAD(+). Residues Asn501 and Tyr660 each contribute to the substrate site.

This sequence in the N-terminal section; belongs to the enoyl-CoA hydratase/isomerase family. It in the C-terminal section; belongs to the 3-hydroxyacyl-CoA dehydrogenase family. Heterotetramer of two alpha chains (FadB) and two beta chains (FadA).

It carries out the reaction a (3S)-3-hydroxyacyl-CoA + NAD(+) = a 3-oxoacyl-CoA + NADH + H(+). The catalysed reaction is a (3S)-3-hydroxyacyl-CoA = a (2E)-enoyl-CoA + H2O. The enzyme catalyses a 4-saturated-(3S)-3-hydroxyacyl-CoA = a (3E)-enoyl-CoA + H2O. It catalyses the reaction (3S)-3-hydroxybutanoyl-CoA = (3R)-3-hydroxybutanoyl-CoA. It carries out the reaction a (3Z)-enoyl-CoA = a 4-saturated (2E)-enoyl-CoA. The catalysed reaction is a (3E)-enoyl-CoA = a 4-saturated (2E)-enoyl-CoA. Its pathway is lipid metabolism; fatty acid beta-oxidation. Its function is as follows. Involved in the aerobic and anaerobic degradation of long-chain fatty acids via beta-oxidation cycle. Catalyzes the formation of 3-oxoacyl-CoA from enoyl-CoA via L-3-hydroxyacyl-CoA. It can also use D-3-hydroxyacyl-CoA and cis-3-enoyl-CoA as substrate. The polypeptide is Fatty acid oxidation complex subunit alpha (Pseudomonas aeruginosa (strain LESB58)).